A 133-amino-acid polypeptide reads, in one-letter code: Large ribosomal subunit protein uL14 (133 aa).

This sequence belongs to the universal ribosomal protein uL14 family. In terms of assembly, part of the 50S ribosomal subunit. Forms a cluster with proteins L3 and L19. In the 70S ribosome, L14 and L19 interact and together make contacts with the 16S rRNA in bridges B5 and B8.

Binds to 23S rRNA. Forms part of two intersubunit bridges in the 70S ribosome. The protein is Large ribosomal subunit protein uL14 of Gloeobacter violaceus (strain ATCC 29082 / PCC 7421).